The primary structure comprises 1250 residues: Probable autotransporter YfaL (1250 aa).

A signal peptide spans 1–28 (MRIIFLRKEYLSLLPSMIASLFSANGVA). Positions 914–951 (RSQEVTPPSPPDPDPTPDPDPTPDPDPTPDPEPTPAYQ) are disordered. Repeat unit 1 spans residues 919 to 920 (TP). The interval 919–948 (TPPSPPDPDPTPDPDPTPDPDPTPDPEPTP) is 15 X 2 AA approximate tandem repeats of [DTPE]-P. One copy of the 2; approximate repeat lies at 921–922 (PS). Repeat unit 3 spans residues 923-924 (PP). The stretch at 925–926 (DP) is one 4; approximate repeat. 11 tandem repeats follow at residues 927 to 928 (DP), 929 to 930 (TP), 931 to 932 (DP), 933 to 934 (DP), 935 to 936 (TP), 937 to 938 (DP), 939 to 940 (DP), 941 to 942 (TP), 943 to 944 (DP), 945 to 946 (EP), and 947 to 948 (TP). Over residues 928 to 942 (PTPDPDPTPDPDPTP) the composition is skewed to acidic residues. An Autotransporter domain is found at 980–1250 (AGGDGQTLNL…AGFLSMTVKW (271 aa)).

In terms of processing, an approximately 170 kDa protein is detected in the outer membrane, while a C-terminal 55 kDa fragment is detected in whole cells. The full-length putative autotransporter may be cleaved to release the mature protein from the outer membrane; Pefabloc SC, a Ser-Thr protease inhibitor prevents the appearance of the 55 kDa C--terminal fragment.

It localises to the periplasm. The protein resides in the secreted. Its subcellular location is the cell surface. The protein localises to the cell outer membrane. Its function is as follows. Probably an autotransporter. Upon overexpression shows increased adherence to polyvinyl chloride (PVC) plates, increased mature biofilm formation. The polypeptide is Probable autotransporter YfaL (yfaL) (Escherichia coli (strain K12)).